The following is a 153-amino-acid chain: Small ribosomal subunit protein uS19A (153 aa).

It belongs to the universal ribosomal protein uS19 family. In terms of assembly, component of the small ribosomal subunit (SSU). Mature yeast ribosomes consist of a small (40S) and a large (60S) subunit. The 40S small subunit contains 1 molecule of ribosomal RNA (18S rRNA) and at least 33 different proteins. The large 60S subunit contains 3 rRNA molecules (25S, 5.8S and 5S rRNA) and at least 46 different proteins.

Its subcellular location is the cytoplasm. The protein localises to the nucleus. It is found in the nucleolus. Its function is as follows. Component of the ribosome, a large ribonucleoprotein complex responsible for the synthesis of proteins in the cell. The small ribosomal subunit (SSU) binds messenger RNAs (mRNAs) and translates the encoded message by selecting cognate aminoacyl-transfer RNA (tRNA) molecules. The large subunit (LSU) contains the ribosomal catalytic site termed the peptidyl transferase center (PTC), which catalyzes the formation of peptide bonds, thereby polymerizing the amino acids delivered by tRNAs into a polypeptide chain. The nascent polypeptides leave the ribosome through a tunnel in the LSU and interact with protein factors that function in enzymatic processing, targeting, and the membrane insertion of nascent chains at the exit of the ribosomal tunnel. uS19 is involved in the nuclear export of the small ribosomal subunit precursor. Has a role in the late stage of the assembly of pre-40S particles within the nucleus and controls their export to the cytoplasm. In Schizosaccharomyces pombe (strain 972 / ATCC 24843) (Fission yeast), this protein is Small ribosomal subunit protein uS19A (rps1501).